The following is a 247-amino-acid chain: Probable transcriptional regulatory protein PBPRA1113 (247 aa).

The protein belongs to the TACO1 family.

It localises to the cytoplasm. This is Probable transcriptional regulatory protein PBPRA1113 from Photobacterium profundum (strain SS9).